Here is a 218-residue protein sequence, read N- to C-terminus: ADP-sugar pyrophosphatase (218 aa).

M1 bears the N-acetylmethionine mark. A Phosphoserine modification is found at S10. W27 serves as a coordination point for substrate. K41 participates in a covalent cross-link: Glycyl lysine isopeptide (Lys-Gly) (interchain with G-Cter in SUMO2). T44 carries the phosphothreonine modification. Residues 45 to 46 (WE) and R83 each bind substrate. In terms of domain architecture, Nudix hydrolase spans 56-196 (KSADAVSVIP…EQHLTVDAKV (141 aa)). A95 serves as a coordination point for Mg(2+). Residues 96-117 (GFIEDGESPEAAALRELEEETG) carry the Nudix box motif. A substrate-binding site is contributed by F97. Residues E111 and E115 each coordinate Mg(2+). D132 serves as a coordination point for substrate. E165 serves as a coordination point for Mg(2+). N6-acetyllysine occurs at positions 209 and 217.

This sequence belongs to the Nudix hydrolase family. Homodimer. Interacts with PARG. The cofactor is Mg(2+). In terms of processing, phosphorylation at Thr-44 is required for homodimer stability; dephosphorylation results in destabilization of the homodimer. Dephosphorylation at Thr-44 promotes the ATP-synthesis activity. In terms of tissue distribution, widely expressed. Most abundant in liver.

The protein resides in the nucleus. The catalysed reaction is D-ribose 5-phosphate + ATP + H(+) = ADP-D-ribose + diphosphate. The enzyme catalyses ADP-D-ribose + H2O = D-ribose 5-phosphate + AMP + 2 H(+). It catalyses the reaction 8-oxo-dGDP + H2O = 8-oxo-dGMP + phosphate + H(+). Enzyme that can either act as an ADP-sugar pyrophosphatase in absence of diphosphate or catalyze the synthesis of ATP in presence of diphosphate. In absence of diphosphate, hydrolyzes with similar activities various modified nucleoside diphosphates such as ADP-ribose, ADP-mannose, ADP-glucose, 8-oxo-GDP and 8-oxo-dGDP. Can also hydrolyze other nucleotide sugars with low activity. In presence of diphosphate, mediates the synthesis of ATP in the nucleus by catalyzing the conversion of ADP-ribose to ATP and ribose 5-phosphate. Nuclear ATP synthesis takes place when dephosphorylated at Thr-44. Nuclear ATP generation is required for extensive chromatin remodeling events that are energy-consuming. Does not play a role in U8 snoRNA decapping activity. Binds U8 snoRNA. The polypeptide is ADP-sugar pyrophosphatase (Mus musculus (Mouse)).